We begin with the raw amino-acid sequence, 169 residues long: uncharacterized protein (169 aa).

Residues 1-21 (MVPVARASLFTLACLLVSVCA) form the signal peptide.

As to expression, component of the acid-soluble and acid-insoluble organic matrix of calcified shell layers (at protein level).

It is found in the secreted. This is an uncharacterized protein from Haliotis asinina (Donkey's ear abalone).